The following is a 445-amino-acid chain: Alkylglycerol monooxygenase (445 aa).

2 helical membrane passes run 43-63 and 111-131; these read ATPF…ILKG and WDSP…YYWF. In terms of domain architecture, Fatty acid hydroxylase spans 120–249; the sequence is AFLGVDFGYY…LIIWDKIFGT (130 aa). Residues 132 to 136 carry the Histidine box-1 motif; sequence HRMAH. The Histidine box-2 motif lies at 145-149; that stretch reads HQTHH. A Histidine box-3 motif is present at residues 221 to 225; it reads HRVHH. The next 3 membrane-spanning stretches (helical) occupy residues 334-354, 363-383, and 413-433; these read LLKI…EETF, VTLL…GFLL, and VPSL…FWGV.

This sequence belongs to the sterol desaturase family. TMEM195 subfamily. Requires Fe cation as cofactor.

The protein resides in the endoplasmic reticulum membrane. It catalyses the reaction 1-O-(1,2-saturated-alkyl)-sn-glycerol + (6R)-L-erythro-5,6,7,8-tetrahydrobiopterin + O2 = a 1-(1-hydroxyalkyl)-sn-glycerol + (6R)-L-erythro-6,7-dihydrobiopterin + H2O. Functionally, glyceryl-ether monooxygenase that cleaves the O-alkyl bond of ether lipids. Ether lipids are essential components of brain membranes. This is Alkylglycerol monooxygenase (AGMO) from Homo sapiens (Human).